Reading from the N-terminus, the 240-residue chain is Sugar fermentation stimulation protein homolog (240 aa).

The protein belongs to the SfsA family.

The chain is Sugar fermentation stimulation protein homolog from Saccharolobus islandicus (strain M.16.4 / Kamchatka #3) (Sulfolobus islandicus).